Here is a 377-residue protein sequence, read N- to C-terminus: O-phospho-L-seryl-tRNA:Cys-tRNA synthase (377 aa).

Pyridoxal 5'-phosphate is bound by residues 82–83 (AR), N189, and 212–214 (SGH). N6-(pyridoxal phosphate)lysine is present on K215.

It belongs to the SepCysS family. In terms of assembly, homodimer. Interacts with SepRS. It depends on pyridoxal 5'-phosphate as a cofactor.

The enzyme catalyses O-phospho-L-seryl-tRNA(Cys) + hydrogen sulfide + H(+) = L-cysteinyl-tRNA(Cys) + phosphate. Converts O-phospho-L-seryl-tRNA(Cys) (Sep-tRNA(Cys)) to L-cysteinyl-tRNA(Cys) (Cys-tRNA(Cys)). In Methanocaldococcus jannaschii (strain ATCC 43067 / DSM 2661 / JAL-1 / JCM 10045 / NBRC 100440) (Methanococcus jannaschii), this protein is O-phospho-L-seryl-tRNA:Cys-tRNA synthase.